A 321-amino-acid chain; its full sequence is Olfactory receptor 5K3 (321 aa).

The Extracellular portion of the chain corresponds to 1–25 (MNKENHSLIAEFILTGFTYHPKLKT). The N-linked (GlcNAc...) asparagine glycan is linked to N5. The chain crosses the membrane as a helical span at residues 26–46 (VLFVVFFAIYLITMVGNIGLV). Over 47 to 56 (ALIYIEQRLH) the chain is Cytoplasmic. A helical transmembrane segment spans residues 57-77 (TPMYIFLGNLVLMDSCCSSAI). The Extracellular portion of the chain corresponds to 78–97 (TPKMLENFFSEDKRITLYEC). A disulfide bridge connects residues C97 and C179. A helical transmembrane segment spans residues 98–118 (MAQFYFLCLAETTDCFLLAAM). The Cytoplasmic portion of the chain corresponds to 119-143 (AYDCYVAICNPLQYHTMMSKTLCIQ). Residues 144 to 164 (MTAGAYLAGNLHPMIEVEFLL) traverse the membrane as a helical segment. Topologically, residues 165-196 (RLTFCGSHQINHFFCDVLPLYRLSCINPYINE) are extracellular. The chain crosses the membrane as a helical span at residues 197-217 (LVLFILAGSIQIFTIVLVSYF). Residues 218-235 (YILFTIFTMKSKEGRGKA) lie on the Cytoplasmic side of the membrane. The helical transmembrane segment at 236–256 (LSTCASHFLSVSIFCDSLLFM) threads the bilayer. The Extracellular portion of the chain corresponds to 257 to 269 (YARPGAVNEGDKD). The chain crosses the membrane as a helical span at residues 270-290 (IPVAIFYTLVIPLLNPFIYSL). At 291-321 (RNKEVINIMKKIMKKRKFCHILKQMSSPLAT) the chain is on the cytoplasmic side.

This sequence belongs to the G-protein coupled receptor 1 family.

The protein localises to the cell membrane. In terms of biological role, odorant receptor. The chain is Olfactory receptor 5K3 (OR5K3) from Homo sapiens (Human).